The following is a 381-amino-acid chain: Tafazzin (381 aa).

Residues 1–25 (MSFRDVLERGDEFLEAYPRRSPLWR) are Mitochondrial intermembrane-facing. The stretch at 26–47 (FLSYSTSLLTFGVSKLLLFTCY) is an intramembrane region. Over 48–381 (NVKLNGFEKL…PEGKPKGKDD (334 aa)) the chain is Mitochondrial intermembrane. The short motif at 77–82 (HMSMVD) is the HXXXXD motif element. The required for membrane insertion stretch occupies residues 215–232 (LEATKPPIVVPIFATGFE).

Belongs to the taffazin family.

It localises to the mitochondrion outer membrane. The protein localises to the mitochondrion inner membrane. The catalysed reaction is 1'-[1,2-diacyl-sn-glycero-3-phospho],3'-[1-acyl-sn-glycero-3-phospho]-glycerol + a 1,2-diacyl-sn-glycero-3-phosphocholine = a cardiolipin + a 1-acyl-sn-glycero-3-phosphocholine. The enzyme catalyses 1,2-di-(9Z,12Z-octadecadienoyl)-sn-glycero-3-phosphocholine + 1'-[1,2-di-(9Z,12Z-octadecadienoyl)-sn-glycero-3-phospho]-3'-[1-(9Z,12Z-octadecadienoyl)-sn-glycero-3-phospho]-glycerol = 1-(9Z,12Z)-octadecadienoyl-sn-glycero-3-phosphocholine + 1',3'-bis-[1,2-di-(9Z,12Z-octadecadienoyl)-sn-glycero-3-phospho]-glycerol. It catalyses the reaction 1'-[1,2-di-(9Z-octadecenoyl)-sn-glycero-3-phospho]-3'-[1-(9Z-octadecenoyl)-2-hexadecanoyl-sn-glycero-3-phospho]-glycerol + 1-hexadecanoyl-sn-glycero-3-phosphocholine = 1'-[1,2-di-(9Z-octadecenoyl)-sn-glycero-3-phospho]-3'-[1-(9Z-octadecenoyl)-sn-glycero-3-phospho]-glycerol + 1,2-dihexadecanoyl-sn-glycero-3-phosphocholine. It carries out the reaction 1'-[1,2-di-(9Z-octadecenoyl)-sn-glycero-3-phospho]-3'-[1-(9Z-octadecenoyl)-2-(9Z-hexadecenoyl)-sn-glycero-3-phospho]-glycerol + 1-(9Z-hexadecenoyl)-sn-glycero-3-phosphocholine = 1,2-di-(9Z-hexadecenoyl)-sn-glycero-3-phosphocholine + 1'-[1,2-di-(9Z-octadecenoyl)-sn-glycero-3-phospho]-3'-[1-(9Z-octadecenoyl)-sn-glycero-3-phospho]-glycerol. The catalysed reaction is 1',3'-bis[1,2-di-(9Z-octadecenoyl)-sn-glycero-3-phospho]-glycerol + 1-(9Z-octadecenoyl)-sn-glycero-3-phosphocholine = 1'-[1,2-di-(9Z-octadecenoyl)-sn-glycero-3-phospho]-3'-[1-(9Z-octadecenoyl)-sn-glycero-3-phospho]-glycerol + 1,2-di-(9Z-octadecenoyl)-sn-glycero-3-phosphocholine. The enzyme catalyses 1'-[1,2-di-(9Z-octadecenoyl)-sn-glycero-3-phospho]-3'-[1-(9Z-octadecenoyl)-2-(9Z,12Z-octadecadienoyl)-sn-glycero-3-phospho]-glycerol + 1-(9Z,12Z)-octadecadienoyl-sn-glycero-3-phosphocholine = 1,2-di-(9Z,12Z-octadecadienoyl)-sn-glycero-3-phosphocholine + 1'-[1,2-di-(9Z-octadecenoyl)-sn-glycero-3-phospho]-3'-[1-(9Z-octadecenoyl)-sn-glycero-3-phospho]-glycerol. It catalyses the reaction 1'-[1,2-di-(9Z-octadecenoyl)-sn-glycero-3-phospho]-3'-[1-(9Z-octadecenoyl)-2-(9Z-hexadecenoyl)-sn-glycero-3-phospho]-glycerol + 1-hexadecanoyl-sn-glycero-3-phosphocholine = 1-hexadecanoyl-2-(9Z-hexadecenoyl)-sn-glycero-3-phosphocholine + 1'-[1,2-di-(9Z-octadecenoyl)-sn-glycero-3-phospho]-3'-[1-(9Z-octadecenoyl)-sn-glycero-3-phospho]-glycerol. It carries out the reaction 1'-[1,2-di-(9Z-octadecenoyl)-sn-glycero-3-phospho]-3'-[1-(9Z-octadecenoyl)-2-hexadecanoyl-sn-glycero-3-phospho]-glycerol + 1-(9Z-hexadecenoyl)-sn-glycero-3-phosphocholine = 1-(9Z-hexadecenoyl)-2-hexadecanoyl-sn-glycero-3-phosphocholine + 1'-[1,2-di-(9Z-octadecenoyl)-sn-glycero-3-phospho]-3'-[1-(9Z-octadecenoyl)-sn-glycero-3-phospho]-glycerol. The catalysed reaction is 2 1'-[1,2-diacyl-sn-glycero-3-phospho],3'-[1-acyl-sn-glycero-3-phospho]-glycerol = 1',3'-bis-[1-acyl-sn-glycero-3-phospho]-glycerol + a cardiolipin. The enzyme catalyses 2 1'-[1,2-di-(9Z-octadecenoyl)-sn-glycero-3-phospho]-3'-[1-(9Z-octadecenoyl)-sn-glycero-3-phospho]-glycerol = 1',3'-bis-[1-(9Z-octadecenoyl)-sn-glycero-3-phospho]-glycerol + 1',3'-bis[1,2-di-(9Z-octadecenoyl)-sn-glycero-3-phospho]-glycerol. It catalyses the reaction 1,2-di-(9Z-hexadecenoyl)-sn-glycero-3-phosphocholine + 1-hexadecanoyl-sn-glycero-3-phosphocholine = 1-hexadecanoyl-2-(9Z-hexadecenoyl)-sn-glycero-3-phosphocholine + 1-(9Z-hexadecenoyl)-sn-glycero-3-phosphocholine. It carries out the reaction 1'-[1,2-di-(9Z,12Z-octadecadienoyl)-sn-glycero-3-phospho]-3'-[1-(9Z,12Z-octadecadienoyl)-sn-glycero-3-phospho]-glycerol + 1,2-di-(9Z-octadecenoyl)-sn-glycero-3-phosphocholine = 1'-[1,2-di-(9Z,12Z-octadecadienoyl)-sn-glycero-3-phospho]-3'-[1-(9Z,12Z-octadecadienoyl)-2-(9Z-octadecenoyl)-sn-glycero-3-phospho]-glycerol + 1-(9Z-octadecenoyl)-sn-glycero-3-phosphocholine. The protein operates within phospholipid metabolism. Acyltransferase required to remodel newly synthesized phospholipid cardiolipin (1',3'-bis-[1,2-diacyl-sn-glycero-3-phospho]-glycerol or CL), a key component of the mitochondrial inner membrane, with tissue specific acyl chains necessary for adequate mitochondrial function. Its role in cellular physiology is to improve mitochondrial performance. CL is critical for the coassembly of lipids and proteins in mitochondrial membranes, for instance, remodeling of the acyl groups of CL in the mitochondrial inner membrane affects the assembly and stability of respiratory chain complex IV and its supercomplex forms. Catalyzes the transacylation between phospholipids and lysophospholipids, with the highest rate being between phosphatidylcholine (1,2-diacyl-sn-glycero-3-phosphocholine or PC) and CL. Catalyzes both 1-acyl-sn-glycero-3-phosphocholine (lysophosphatidylcholine or LPC) reacylation and PC-CL transacylation, that means, it exchanges acyl groups between CL and PC by a combination of forward and reverse transacylations. Also catalyzes transacylations between other phospholipids such as phosphatidylethanolamine (1,2-diacyl-sn-glycero-3-phosphoethanolamine or PE) and CL, between PC and PE, and between PC and phosphatidate (1,2-diacyl-sn-glycero-3-phosphate or PA), although at lower rate. Not regiospecific, it transfers acyl groups into any of the sn-1 and sn-2 positions of the monolysocardiolipin (MLCL), which is an important prerequisite for uniformity and symmetry in CL acyl distribution. Cannot transacylate dilysocardiolipin (DLCL), thus, the role of MLCL is limited to that of an acyl acceptor. CoA-independent, it can reshuffle molecular species within a single phospholipid class. Redistributes fatty acids between MLCL, CL, and other lipids, which prolongs the half-life of CL. Its action is completely reversible, which allows for cyclic changes, such as fission and fusion or bending and flattening of the membrane. Hence, by contributing to the flexibility of the lipid composition, it plays an important role in the dynamics of mitochondria membranes. Essential for the final stage of spermatogenesis, spermatid individualization. Required for the initiation of mitophagy. This chain is Tafazzin (TAZ1), found in Saccharomyces cerevisiae (strain ATCC 204508 / S288c) (Baker's yeast).